The sequence spans 399 residues: Dual-specificity RNA methyltransferase RlmN (399 aa).

Catalysis depends on Glu116, which acts as the Proton acceptor. Residues 122–352 (SEDRLTLCIS…VLLRRSMGRD (231 aa)) form the Radical SAM core domain. A disulfide bond links Cys129 and Cys357. Positions 136, 140, and 143 each coordinate [4Fe-4S] cluster. S-adenosyl-L-methionine contacts are provided by residues 185 to 186 (GE), Ser217, 238 to 240 (SLN), and Asn314. Cys357 (S-methylcysteine intermediate) is an active-site residue.

It belongs to the radical SAM superfamily. RlmN family. [4Fe-4S] cluster is required as a cofactor.

It localises to the cytoplasm. The catalysed reaction is adenosine(2503) in 23S rRNA + 2 reduced [2Fe-2S]-[ferredoxin] + 2 S-adenosyl-L-methionine = 2-methyladenosine(2503) in 23S rRNA + 5'-deoxyadenosine + L-methionine + 2 oxidized [2Fe-2S]-[ferredoxin] + S-adenosyl-L-homocysteine. The enzyme catalyses adenosine(37) in tRNA + 2 reduced [2Fe-2S]-[ferredoxin] + 2 S-adenosyl-L-methionine = 2-methyladenosine(37) in tRNA + 5'-deoxyadenosine + L-methionine + 2 oxidized [2Fe-2S]-[ferredoxin] + S-adenosyl-L-homocysteine. Specifically methylates position 2 of adenine 2503 in 23S rRNA and position 2 of adenine 37 in tRNAs. m2A2503 modification seems to play a crucial role in the proofreading step occurring at the peptidyl transferase center and thus would serve to optimize ribosomal fidelity. This is Dual-specificity RNA methyltransferase RlmN from Bdellovibrio bacteriovorus (strain ATCC 15356 / DSM 50701 / NCIMB 9529 / HD100).